The primary structure comprises 375 residues: MHNQAPIQRRKSTRIYVGNVPIGDGAPIAVQSMTNTRTTDVEATVNQIKALERVGADIVRVSVPTMDAAEAFKLIKQRVNVPLVADIHFDYRIALKVAEYGVDCLRINPGNIGNEERIRMVVDCARDKNIPIRIGVNAGSLEKDLQEKYGEPTPQALLESAMRHVDHLDRLNFDQFKVSVKASDVFLAVESYRLLAKQIDQPLHLGITEAGGARSGAVKSAIGLGLLLSEGIGDTLRVSLAADPVEEIKVGFDILKSLRIRSRGINFIACPTCSRQEFDVIGTVNALEQRLEDIITPMDVSIIGCVVNGPGEALVSTLGVTGGNKKSGLYEDGVRKDRLDNNDMIDQLEARIRAKASQLDEARRIDVQQVGKIIT.

Residues C270, C273, C305, and E312 each coordinate [4Fe-4S] cluster.

The protein belongs to the IspG family. Requires [4Fe-4S] cluster as cofactor.

The enzyme catalyses (2E)-4-hydroxy-3-methylbut-2-enyl diphosphate + oxidized [flavodoxin] + H2O + 2 H(+) = 2-C-methyl-D-erythritol 2,4-cyclic diphosphate + reduced [flavodoxin]. It functions in the pathway isoprenoid biosynthesis; isopentenyl diphosphate biosynthesis via DXP pathway; isopentenyl diphosphate from 1-deoxy-D-xylulose 5-phosphate: step 5/6. Converts 2C-methyl-D-erythritol 2,4-cyclodiphosphate (ME-2,4cPP) into 1-hydroxy-2-methyl-2-(E)-butenyl 4-diphosphate. This chain is 4-hydroxy-3-methylbut-2-en-1-yl diphosphate synthase (flavodoxin), found in Shigella flexneri serotype 5b (strain 8401).